Here is a 310-residue protein sequence, read N- to C-terminus: GPN-loop GTPase 2 (310 aa).

Ala2 is modified (N-acetylalanine). 19 to 24 (GSGKTT) contributes to the GTP binding site. Residues 76–78 (GPN) carry the Gly-Pro-Asn (GPN)-loop; involved in dimer interface motif. 178–181 (SKMD) lines the GTP pocket.

Belongs to the GPN-loop GTPase family. As to quaternary structure, heterodimers with GPN1 or GPN3. Binds to RNA polymerase II (RNAPII).

Functionally, small GTPase required for proper localization of RNA polymerase II and III (RNAPII and RNAPIII). May act at an RNAP assembly step prior to nuclear import. The polypeptide is GPN-loop GTPase 2 (GPN2) (Bos taurus (Bovine)).